The chain runs to 206 residues: Protein Nef (206 aa).

Gly2 carries the N-myristoyl glycine; by host lipid modification. Ser6 is modified (phosphoserine; by host). The segment at Glu62 to Glu65 is acidic; interacts with host PACS1 and PACS2; stabilizes the interaction of NEF/MHC-I with host AP1M1; necessary for MHC-I internalization. An SH3-binding; interaction with Src family tyrosine kinases region spans residues Pro69 to Pro78. The short motif at Pro72–Pro75 is the PxxP; stabilizes the interaction of NEF/MHC-I with host AP1M1; necessary for MHC-I internalization element. Residues Asp108 to Trp124 are mediates dimerization, Nef-PTE1 interaction. The tract at residues Asp108–Trp124 is mediates dimerization, Nef-PTE1 interaction, Nef-induced CD4 and MHC-I down-regulation and enhancement of infectivity. The tract at residues Val148 to Val180 is binding to ATP6V1H. The short motif at Leu164 to Leu165 is the Dileucine internalization motif; necessary for CD4 internalization element. The Diacidic; necessary for CD4 internalization motif lies at Asp174–Asp175.

This sequence belongs to the lentivirus primate group Nef protein family. In terms of assembly, monomer; cytosolic form. Homodimer; membrane bound form. Interacts with Nef associated p21-activated kinase (PAK2); this interaction activates PAK2. Associates with the Nef-MHC-I-AP1 complex; this complex is required for MHC-I internalization. Interacts (via C-terminus) with host PI3-kinase. Interacts with host PACS1; this interaction seems to be weak. Interacts with host PACS2. Interacts with host LCK and MAPK3; these interactions inhibit the kinase activity of the latter. Interacts with host ATP6V1H; this interaction may play a role in CD4 endocytosis. Associates with the CD4-Nef-AP2 complex; this complex is required for CD4 internalization. Interacts with host AP2 subunit alpha and AP2 subunit sigma2. Interacts with TCR-zeta chain; this interaction up-regulates the Fas ligand (FasL) surface expression. Interacts with host HCK, LYN, and SRC; these interactions activate the Src family kinases. Interacts with MAP3K5; this interaction inhibits the Fas and TNFR-mediated death signals. Interacts with beta-COP and PTE1. Interacts with human RACK1; this increases Nef phosphorylation by PKC. Interacts with TP53; this interaction decreases the half-life of TP53, protecting the infected cell against p53-mediated apoptosis. The virion-associated Nef proteins are cleaved by the viral protease to release the soluble C-terminal core protein. Nef is probably cleaved concomitantly with viral structural proteins on maturation of virus particles. In terms of processing, myristoylated. Post-translationally, phosphorylated on serine residues, probably by host PKCdelta and theta.

The protein localises to the host cell membrane. It localises to the virion. Its subcellular location is the secreted. The protein resides in the host Golgi apparatus membrane. Its function is as follows. Factor of infectivity and pathogenicity, required for optimal virus replication. Alters numerous pathways of T-lymphocytes function and down-regulates immunity surface molecules in order to evade host defense and increase viral infectivity. Alters the functionality of other immunity cells, like dendritic cells, monocytes/macrophages and NK cells. In infected CD4(+) T-lymphocytes, down-regulates the surface MHC-I, mature MHC-II, CD4, CD28, CCR5 and CXCR4 molecules. Mediates internalization and degradation of host CD4 through the interaction of with the cytoplasmic tail of CD4, the recruitment of AP-2 (clathrin adapter protein complex 2), internalization through clathrin coated pits, and subsequent transport to endosomes and lysosomes for degradation. Diverts host MHC-I molecules to the trans-Golgi network-associated endosomal compartments by an endocytic pathway to finally target them for degradation. MHC-I down-regulation may involve AP-1 (clathrin adapter protein complex 1) or possibly Src family kinase-ZAP70/Syk-PI3K cascade recruited by PACS2. In consequence infected cells are masked for immune recognition by cytotoxic T-lymphocytes. Decreasing the number of immune receptors also prevents reinfection by more HIV particles (superinfection). Down-regulates host SERINC3 and SERINC5 thereby excluding these proteins from the viral particles. Virion infectivity is drastically higher when SERINC3 or SERINC5 are excluded from the viral envelope, because these host antiviral proteins impair the membrane fusion event necessary for subsequent virion penetration. Functionally, bypasses host T-cell signaling by inducing a transcriptional program nearly identical to that of anti-CD3 cell activation. Interaction with TCR-zeta chain up-regulates the Fas ligand (FasL). Increasing surface FasL molecules and decreasing surface MHC-I molecules on infected CD4(+) cells send attacking cytotoxic CD8+ T-lymphocytes into apoptosis. In terms of biological role, plays a role in optimizing the host cell environment for viral replication without causing cell death by apoptosis. Protects the infected cells from apoptosis in order to keep them alive until the next virus generation is ready to strike. Inhibits the Fas and TNFR-mediated death signals by blocking MAP3K5/ASK1. Decreases the half-life of TP53, protecting the infected cell against p53-mediated apoptosis. Inhibits the apoptotic signals regulated by the Bcl-2 family proteins through the formation of a Nef/PI3-kinase/PAK2 complex that leads to activation of PAK2 and induces phosphorylation of host BAD. Its function is as follows. Extracellular Nef protein targets CD4(+) T-lymphocytes for apoptosis by interacting with CXCR4 surface receptors. This is Protein Nef from Homo sapiens (Human).